Here is a 173-residue protein sequence, read N- to C-terminus: SPbeta prophage-derived putative HNH homing endonuclease YosQ (173 aa).

In terms of biological role, a possible homing endonuclease, it is entirely encoded within the YosP intron. This is SPbeta prophage-derived putative HNH homing endonuclease YosQ (yosQ) from Bacillus subtilis (strain 168).